Consider the following 511-residue polypeptide: Maturase K (511 aa).

This sequence belongs to the intron maturase 2 family. MatK subfamily.

It is found in the plastid. The protein resides in the chloroplast. Usually encoded in the trnK tRNA gene intron. Probably assists in splicing its own and other chloroplast group II introns. The protein is Maturase K of Oryza nivara (Indian wild rice).